The sequence spans 390 residues: Putative gustatory receptor 59d (390 aa).

Residues 1-38 (MADLLKLCLRIAYAYGRLTGVINFKIDLKTGQALVTRG) are Cytoplasmic-facing. A helical membrane pass occupies residues 39–59 (ATLISVSTHLLIFALLLYQTM). Topologically, residues 60–75 (RKSVVNVMWKYANSLH) are extracellular. The chain crosses the membrane as a helical span at residues 76 to 96 (EYVFLVIAGFRVVCVFLELVS). The Cytoplasmic portion of the chain corresponds to 97 to 128 (RWSQRRTFVRLFNSFRRLYQRNPDIIQYCRRS). The chain crosses the membrane as a helical span at residues 129 to 149 (IVSKFFCVTMTETLHIIVTLA). Topologically, residues 150–156 (MMRNRLS) are extracellular. A helical membrane pass occupies residues 157 to 177 (IALALRIWAVLSLTAIINVII). Residues 178–252 (TQYYVATACV…NLSTAYEGEV (75 aa)) are Cytoplasmic-facing. Residues 253–273 (VCLVITYYLNMLGTSYLLFSI) form a helical membrane-spanning segment. Residues 274-283 (SKYGNFGNNL) lie on the Extracellular side of the membrane. A helical transmembrane segment spans residues 284 to 304 (LVIITLCGIVYFVFYVVDCWI). Residues 305–366 (NAFNVFYLLD…MYGLFEFGRG (62 aa)) lie on the Cytoplasmic side of the membrane. The helical transmembrane segment at 367–383 (TSFAVFNSLLTHSLLLI) threads the bilayer. Topologically, residues 384 to 390 (QYDVQNF) are extracellular.

This sequence belongs to the insect chemoreceptor superfamily. Gustatory receptor (GR) family. Gr22e subfamily. In terms of tissue distribution, expressed in the adult labellar chemosensory neurons. In larvae, is expressed in neurons of the terminal external chemosensory organ as well as in the dorsal pharyngeal sense organ.

It localises to the cell membrane. Functionally, probable gustatory receptor which mediates acceptance or avoidance behavior, depending on its substrates. This Drosophila melanogaster (Fruit fly) protein is Putative gustatory receptor 59d (Gr59d).